The chain runs to 119 residues: Succinate dehydrogenase assembly factor 2, mitochondrial (119 aa).

Belongs to the SDHAF2 family. As to quaternary structure, interacts with the flavoprotein subunit within the SDH catalytic dimer.

The protein resides in the mitochondrion matrix. In terms of biological role, plays an essential role in the assembly of succinate dehydrogenase (SDH), an enzyme complex (also referred to as respiratory complex II) that is a component of both the tricarboxylic acid (TCA) cycle and the mitochondrial electron transport chain, and which couples the oxidation of succinate to fumarate with the reduction of ubiquinone (coenzyme Q) to ubiquinol. Required for flavinylation (covalent attachment of FAD) of the flavoprotein subunit of the SDH catalytic dimer. The chain is Succinate dehydrogenase assembly factor 2, mitochondrial from Caenorhabditis elegans.